We begin with the raw amino-acid sequence, 103 residues long: Heme-copper oxidase subunit 4 (103 aa).

3 helical membrane passes run 20-40 (VWIV…EGIA), 42-62 (NPFV…ALFF), and 75-95 (ITVS…TSVL).

The protein resides in the cell membrane. This is Heme-copper oxidase subunit 4 (aoxC) from Aeropyrum pernix (strain ATCC 700893 / DSM 11879 / JCM 9820 / NBRC 100138 / K1).